Reading from the N-terminus, the 243-residue chain is Protein-L-isoaspartate O-methyltransferase 2 (243 aa).

Residues 21 to 42 (DACADRGHPSAERSTPETERRR) form a disordered region. Residues 23 to 42 (CADRGHPSAERSTPETERRR) show a composition bias toward basic and acidic residues. Residue serine 94 is part of the active site.

The protein belongs to the methyltransferase superfamily. L-isoaspartyl/D-aspartyl protein methyltransferase family.

The protein localises to the cytoplasm. It carries out the reaction [protein]-L-isoaspartate + S-adenosyl-L-methionine = [protein]-L-isoaspartate alpha-methyl ester + S-adenosyl-L-homocysteine. Catalyzes the methyl esterification of L-isoaspartyl residues in peptides and proteins that result from spontaneous decomposition of normal L-aspartyl and L-asparaginyl residues. It plays a role in the repair and/or degradation of damaged proteins. The polypeptide is Protein-L-isoaspartate O-methyltransferase 2 (Anaeromyxobacter sp. (strain Fw109-5)).